A 252-amino-acid chain; its full sequence is Probable phosphatase Shewmr4_2619 (252 aa).

Residues H8, H10, H16, H41, E74, H102, H132, D193, and H195 each coordinate Zn(2+).

Belongs to the PHP family. Zn(2+) serves as cofactor.

The sequence is that of Probable phosphatase Shewmr4_2619 from Shewanella sp. (strain MR-4).